Here is a 381-residue protein sequence, read N- to C-terminus: Protein COS6 (381 aa).

The Cytoplasmic segment spans residues 1–42 (MKENELKNEKSVDVLSVKQLESQKTVLPQDLFRSSFTWFCYE). A helical transmembrane segment spans residues 43–63 (IYKSLVFRIWMLLWLPLSVWW). Topologically, residues 64 to 69 (KLSNNW) are extracellular. The chain crosses the membrane as a helical span at residues 70–90 (IYPLMVSLLVLFWGPVFVLVI). Residues 91–381 (FRLSRKRSLS…QLSCSEESLA (291 aa)) lie on the Cytoplasmic side of the membrane.

The protein belongs to the DUP/COS family.

It localises to the membrane. This chain is Protein COS6 (COS6), found in Saccharomyces cerevisiae (strain ATCC 204508 / S288c) (Baker's yeast).